Reading from the N-terminus, the 213-residue chain is MTSLRYWDISPALDPSTPTWPGDTPFQQEWAARLDEHCPVNVGRVTLSPHTGAHVDAPLHYRADGLAIGQVPLDVYMGPCRVLHCIGATPLVTPEHLAGQLDDLPPRVLLRTFERVPANWPEGFCAIAPTTVECLAERGVRLIGIDTPSLDPQHSKTLDAHHAVGRHGMAILEGVVLDEVPAGDYELLALPLKFTHLDASPVRAVLRSLPTAE.

Residue W20 coordinates substrate. Positions 50, 54, and 56 each coordinate Zn(2+). The Proton donor/acceptor role is filled by H60. 2 residues coordinate Zn(2+): H161 and E173.

The protein belongs to the Cyclase 1 superfamily. KynB family. As to quaternary structure, homodimer. Requires Zn(2+) as cofactor.

The catalysed reaction is N-formyl-L-kynurenine + H2O = L-kynurenine + formate + H(+). Its pathway is amino-acid degradation; L-tryptophan degradation via kynurenine pathway; L-kynurenine from L-tryptophan: step 2/2. Its function is as follows. Catalyzes the hydrolysis of N-formyl-L-kynurenine to L-kynurenine, the second step in the kynurenine pathway of tryptophan degradation. The sequence is that of Kynurenine formamidase from Pseudomonas paraeruginosa (strain DSM 24068 / PA7) (Pseudomonas aeruginosa (strain PA7)).